The following is a 909-amino-acid chain: Tubulin polyglutamylase TTLL7 (909 aa).

The TTL domain maps to 40 to 392 (NGAITANVVG…RASDKKKNLA (353 aa)). Residues lysine 162, 168-169 (MG), 190-193 (QEYL), and 203-205 (KFD) each bind ATP. Arginine 229 is an L-glutamate binding site. 251–252 (TN) contacts ATP. L-glutamate contacts are provided by tyrosine 253, serine 254, and lysine 273. The Mg(2+) site is built by aspartate 338, glutamate 351, and asparagine 353. An L-glutamate-binding site is contributed by lysine 369. The tract at residues 390–452 (NLAKQKAEAQ…ISREEYENRH (63 aa)) is c-MTBD region. 2 disordered regions span residues 517–580 (DEKL…KVSY) and 603–688 (KAAR…PSIS). The span at 518–531 (EKLSGKPTRPKEPR) shows a compositional bias: basic and acidic residues. The span at 532-542 (TLSSMPESTQT) shows a compositional bias: polar residues. A compositionally biased stretch (low complexity) spans 548–562 (NYSSHSSSNSTGSSS). Positions 571–580 (KEGKEKKVSY) are enriched in basic and acidic residues. A compositionally biased stretch (low complexity) spans 604-625 (AARPFSNSSSPSSAASMRRSVS). The segment covering 626–657 (CPRSITALNTQSPTTDQRPFSSRISSTITRPL) has biased composition (polar residues). The segment covering 658–673 (SGNRTNSLNRSSSSNR) has biased composition (low complexity). The segment covering 674-688 (VPQSGTSGSVYPSIS) has biased composition (polar residues).

It belongs to the tubulin--tyrosine ligase family. Interacts with both alpha- and beta-tubulin (via C-terminal tubulin tails). Mg(2+) serves as cofactor.

It is found in the cell projection. Its subcellular location is the cilium. The protein localises to the cytoplasm. The protein resides in the cytoskeleton. It localises to the cilium basal body. It is found in the dendrite. Its subcellular location is the perikaryon. It catalyses the reaction L-glutamyl-[protein] + L-glutamate + ATP = gamma-L-glutamyl-L-glutamyl-[protein] + ADP + phosphate + H(+). The enzyme catalyses (L-glutamyl)(n)-gamma-L-glutamyl-L-glutamyl-[protein] + L-glutamate + ATP = (L-glutamyl)(n+1)-gamma-L-glutamyl-L-glutamyl-[protein] + ADP + phosphate + H(+). In terms of biological role, polyglutamylase which modifies tubulin, generating polyglutamate side chains of variable lengths on the gamma-carboxyl group of specific glutamate residues within the C-terminal tail of tubulin. Mediates both ATP-dependent initiation and elongation steps of the polyglutamylation reaction. Preferentially modifies the beta-tubulin tail over an alpha-tail. Competes with monoglycylase TTLL3 for modification site on beta-tubulin substrate, thereby creating an anticorrelation between glycylation and glutamylation reactions. The polypeptide is Tubulin polyglutamylase TTLL7 (Xenopus tropicalis (Western clawed frog)).